Here is a 179-residue protein sequence, read N- to C-terminus: Natural killer cells antigen CD94 (179 aa).

At 1 to 10 (MAVFKTTLWW) the chain is on the cytoplasmic side. The chain crosses the membrane as a helical; Signal-anchor for type II membrane protein span at residues 11 to 31 (LISGTLGIICLSLTATLGILL). At 32–179 (KNSFTKLSIE…NRYICKQQLI (148 aa)) the chain is on the extracellular side. Cystine bridges form between cysteine 58–cysteine 70 and cysteine 61–cysteine 72. Residues 68 to 175 (YRCNCYFISS…CEDKNRYICK (108 aa)) enclose the C-type lectin domain. Residues asparagine 83 and asparagine 132 are each glycosylated (N-linked (GlcNAc...) asparagine). Disulfide bonds link cysteine 89-cysteine 174 and cysteine 152-cysteine 166.

As to quaternary structure, can form disulfide-bonded heterodimer with NKG2 family members KLRC1 and KLRC2. KLRD1-KLRC1 heterodimer interacts with peptide-bound MHC-E-B2M heterotrimeric complex. KLRD1 plays a prominent role in directly interacting with MHC-E. KLRD1-KLRC1 interacts with much higher affinity with peptide-bound MHC-E-B2M than KLRD1-KLRC2. Interacts with the adapter protein TYROBP/DAP12; this interaction is required for cell surface expression and cell activation. As to expression, natural killer cells.

The protein localises to the cell membrane. Its function is as follows. Immune receptor involved in self-nonself discrimination. In complex with KLRC1 or KLRC2 on cytotoxic and regulatory lymphocyte subsets, recognizes non-classical major histocompatibility (MHC) class Ib molecule MHC-E loaded with self-peptides derived from the signal sequence of classical MHC class Ia and non-classical MHC class Ib molecules. Enables cytotoxic cells to monitor the expression of MHC class I molecules in healthy cells and to tolerate self. Primarily functions as a ligand binding subunit as it lacks the capacity to signal. KLRD1-KLRC1 acts as an immune inhibitory receptor. Key inhibitory receptor on natural killer (NK) cells that regulates their activation and effector functions. Dominantly counteracts T cell receptor signaling on a subset of memory/effector CD8-positive T cells as part of an antigen-driven response to avoid autoimmunity. On intraepithelial CD8-positive gamma-delta regulatory T cells triggers TGFB1 secretion, which in turn limits the cytotoxic programming of intraepithelial CD8-positive alpha-beta T cells, distinguishing harmless from pathogenic antigens. In MHC-E-rich tumor microenvironment, acts as an immune inhibitory checkpoint and may contribute to progressive loss of effector functions of NK cells and tumor-specific T cells, a state known as cell exhaustion. Upon MHC-E-peptide binding, transmits intracellular signals through KLRC1 immunoreceptor tyrosine-based inhibition motifs (ITIMs) by recruiting INPP5D/SHIP-1 and INPPL1/SHIP-2 tyrosine phosphatases to ITIMs, and ultimately opposing signals transmitted by activating receptors through dephosphorylation of proximal signaling molecules. Functionally, KLRD1-KLRC2 acts as an immune activating receptor. On cytotoxic lymphocyte subsets recognizes MHC-E loaded with signal sequence-derived peptides from non-classical MHC class Ib MHC-G molecules, likely playing a role in the generation and effector functions of adaptive NK cells and in maternal-fetal tolerance during pregnancy. Regulates the effector functions of terminally differentiated cytotoxic lymphocyte subsets, and in particular may play a role in adaptive NK cell response to viral infection. Upon MHC-E-peptide binding, transmits intracellular signals via the adapter protein TYROBP/DAP12, triggering the phosphorylation of proximal signaling molecules and cell activation. The chain is Natural killer cells antigen CD94 (KLRD1) from Pongo pygmaeus (Bornean orangutan).